The chain runs to 483 residues: GTPase Obg (483 aa).

In terms of domain architecture, Obg spans 2–159 (SRFIDRVVLH…RDLVLELKSV (158 aa)). The 181-residue stretch at 160 to 340 (ADVGLLGFPS…LTFALAKMVR (181 aa)) folds into the OBG-type G domain. GTP contacts are provided by residues 166-173 (GFPSAGKS), 191-195 (FTTLV), 212-215 (DVPG), 292-295 (NKTD), and 321-323 (SAV). Mg(2+)-binding residues include S173 and T193. Residues 358 to 438 (PVKVKDSSFT…IGDVSFEWEP (81 aa)) form the OCT domain.

This sequence belongs to the TRAFAC class OBG-HflX-like GTPase superfamily. OBG GTPase family. Monomer. It depends on Mg(2+) as a cofactor.

The protein localises to the cytoplasm. In terms of biological role, an essential GTPase which binds GTP, GDP and possibly (p)ppGpp with moderate affinity, with high nucleotide exchange rates and a fairly low GTP hydrolysis rate. Plays a role in control of the cell cycle, stress response, ribosome biogenesis and in those bacteria that undergo differentiation, in morphogenesis control. The sequence is that of GTPase Obg from Rhodococcus erythropolis (strain PR4 / NBRC 100887).